Reading from the N-terminus, the 227-residue chain is Cytidylate kinase (227 aa).

ATP is bound at residue 12–20 (GPSGAGKGT).

It belongs to the cytidylate kinase family. Type 1 subfamily.

It localises to the cytoplasm. The catalysed reaction is CMP + ATP = CDP + ADP. It carries out the reaction dCMP + ATP = dCDP + ADP. In Shigella boydii serotype 4 (strain Sb227), this protein is Cytidylate kinase.